Here is a 176-residue protein sequence, read N- to C-terminus: Adipose-secreted signaling protein (176 aa).

The tract at residues 1–30 (MATAGKGSKGKGTGVRFTPEGTQGHPQEGT) is disordered. Over residues 20 to 30 (EGTQGHPQEGT) the composition is skewed to polar residues.

This sequence belongs to the ADISSP family.

May be involved in thermogenesis and glucose homeostasis. The sequence is that of Adipose-secreted signaling protein from Taeniopygia guttata (Zebra finch).